The chain runs to 332 residues: MNKNFIESNLNKQELSFEVPLRPQCLTDFVGQDSIRDRLEVHIGAARQRGEVLGHCLFSGPPGLGKTTLASILSKAMESNLVLTSGPVIEKAGDLAGILTSLKTGDVLFIDEIHRLNRSVEEYLYQAMEDFALDLMIDSGPNARSIQVKLNQFTLAGATTRLGLLSEPLRSRFAFTCRLEYYDPMILQKILLRTSRILNVKIDSEAALEIAKRSRGTPRVANHLLRWVRDFAQIKANNYIDLSVANRALTMLSIDEKGLDEMDKKMLQTMIDHYSGGPVGINAIAASIGEEPSTVEEVYEPYLILQGLLKRTPRGREVTSLGYQHIVGSSQR.

The segment at 1 to 182 is large ATPase domain (RuvB-L); sequence MNKNFIESNL…FAFTCRLEYY (182 aa). Residues Leu-21, Arg-22, Gly-63, Lys-66, Thr-67, Thr-68, 129–131, Arg-172, Tyr-182, and Arg-219 each bind ATP; that span reads EDF. Thr-67 contributes to the Mg(2+) binding site. Residues 183–253 are small ATPAse domain (RuvB-S); sequence DPMILQKILL…VANRALTMLS (71 aa). Residues 256 to 332 are head domain (RuvB-H); that stretch reads EKGLDEMDKK…YQHIVGSSQR (77 aa). Positions 311 and 316 each coordinate DNA.

Belongs to the RuvB family. As to quaternary structure, homohexamer. Forms an RuvA(8)-RuvB(12)-Holliday junction (HJ) complex. HJ DNA is sandwiched between 2 RuvA tetramers; dsDNA enters through RuvA and exits via RuvB. An RuvB hexamer assembles on each DNA strand where it exits the tetramer. Each RuvB hexamer is contacted by two RuvA subunits (via domain III) on 2 adjacent RuvB subunits; this complex drives branch migration. In the full resolvosome a probable DNA-RuvA(4)-RuvB(12)-RuvC(2) complex forms which resolves the HJ.

It localises to the cytoplasm. The enzyme catalyses ATP + H2O = ADP + phosphate + H(+). Its function is as follows. The RuvA-RuvB-RuvC complex processes Holliday junction (HJ) DNA during genetic recombination and DNA repair, while the RuvA-RuvB complex plays an important role in the rescue of blocked DNA replication forks via replication fork reversal (RFR). RuvA specifically binds to HJ cruciform DNA, conferring on it an open structure. The RuvB hexamer acts as an ATP-dependent pump, pulling dsDNA into and through the RuvAB complex. RuvB forms 2 homohexamers on either side of HJ DNA bound by 1 or 2 RuvA tetramers; 4 subunits per hexamer contact DNA at a time. Coordinated motions by a converter formed by DNA-disengaged RuvB subunits stimulates ATP hydrolysis and nucleotide exchange. Immobilization of the converter enables RuvB to convert the ATP-contained energy into a lever motion, pulling 2 nucleotides of DNA out of the RuvA tetramer per ATP hydrolyzed, thus driving DNA branch migration. The RuvB motors rotate together with the DNA substrate, which together with the progressing nucleotide cycle form the mechanistic basis for DNA recombination by continuous HJ branch migration. Branch migration allows RuvC to scan DNA until it finds its consensus sequence, where it cleaves and resolves cruciform DNA. In Protochlamydia amoebophila (strain UWE25), this protein is Holliday junction branch migration complex subunit RuvB.